Consider the following 312-residue polypeptide: DNA-directed RNA polymerase subunit alpha (312 aa).

An alpha N-terminal domain (alpha-NTD) region spans residues 1–229 (MLQYQIDRVD…ALFQPLATVT (229 aa)). The segment at 241-312 (SAESQIPLEE…ISLPQSRTTA (72 aa)) is alpha C-terminal domain (alpha-CTD).

The protein belongs to the RNA polymerase alpha chain family. In cyanobacteria the RNAP catalytic core is composed of 2 alpha, 1 beta, 1 beta', 1 gamma and 1 omega subunit. When a sigma factor is associated with the core the holoenzyme is formed, which can initiate transcription.

The enzyme catalyses RNA(n) + a ribonucleoside 5'-triphosphate = RNA(n+1) + diphosphate. DNA-dependent RNA polymerase catalyzes the transcription of DNA into RNA using the four ribonucleoside triphosphates as substrates. The polypeptide is DNA-directed RNA polymerase subunit alpha (Synechococcus sp. (strain RCC307)).